The primary structure comprises 173 residues: Peptide deformylase (173 aa).

Positions 98 and 140 each coordinate Fe cation. Glu-141 is a catalytic residue. His-144 serves as a coordination point for Fe cation.

Belongs to the polypeptide deformylase family. It depends on Fe(2+) as a cofactor.

The catalysed reaction is N-terminal N-formyl-L-methionyl-[peptide] + H2O = N-terminal L-methionyl-[peptide] + formate. Functionally, removes the formyl group from the N-terminal Met of newly synthesized proteins. Requires at least a dipeptide for an efficient rate of reaction. N-terminal L-methionine is a prerequisite for activity but the enzyme has broad specificity at other positions. This is Peptide deformylase from Caulobacter vibrioides (strain ATCC 19089 / CIP 103742 / CB 15) (Caulobacter crescentus).